We begin with the raw amino-acid sequence, 430 residues long: Asparagine--tRNA ligase (430 aa).

The protein belongs to the class-II aminoacyl-tRNA synthetase family. As to quaternary structure, homodimer.

Its subcellular location is the cytoplasm. It carries out the reaction tRNA(Asn) + L-asparagine + ATP = L-asparaginyl-tRNA(Asn) + AMP + diphosphate + H(+). The protein is Asparagine--tRNA ligase of Listeria innocua serovar 6a (strain ATCC BAA-680 / CLIP 11262).